We begin with the raw amino-acid sequence, 475 residues long: Ribulose bisphosphate carboxylase large chain (475 aa).

Positions 1–2 (MS) are excised as a propeptide. At P3 the chain carries N-acetylproline. N6,N6,N6-trimethyllysine is present on K14. N123 and T173 together coordinate substrate. K175 (proton acceptor) is an active-site residue. K177 contacts substrate. The Mg(2+) site is built by K201, D203, and E204. An N6-carboxylysine modification is found at K201. Residue H294 is the Proton acceptor of the active site. Substrate is bound by residues R295, H327, and S379.

This sequence belongs to the RuBisCO large chain family. Type I subfamily. Heterohexadecamer of 8 large chains and 8 small chains; disulfide-linked. The disulfide link is formed within the large subunit homodimers. Requires Mg(2+) as cofactor. In terms of processing, the disulfide bond which can form in the large chain dimeric partners within the hexadecamer appears to be associated with oxidative stress and protein turnover.

Its subcellular location is the plastid. The protein resides in the chloroplast. It catalyses the reaction 2 (2R)-3-phosphoglycerate + 2 H(+) = D-ribulose 1,5-bisphosphate + CO2 + H2O. The enzyme catalyses D-ribulose 1,5-bisphosphate + O2 = 2-phosphoglycolate + (2R)-3-phosphoglycerate + 2 H(+). RuBisCO catalyzes two reactions: the carboxylation of D-ribulose 1,5-bisphosphate, the primary event in carbon dioxide fixation, as well as the oxidative fragmentation of the pentose substrate in the photorespiration process. Both reactions occur simultaneously and in competition at the same active site. In Larix occidentalis (Western larch), this protein is Ribulose bisphosphate carboxylase large chain.